A 746-amino-acid polypeptide reads, in one-letter code: Polyribonucleotide nucleotidyltransferase (746 aa).

Mg(2+)-binding residues include aspartate 519 and aspartate 525. The KH domain maps to proline 585–isoleucine 644. Positions glycine 656–valine 728 constitute an S1 motif domain.

It belongs to the polyribonucleotide nucleotidyltransferase family. Requires Mg(2+) as cofactor.

Its subcellular location is the cytoplasm. The catalysed reaction is RNA(n+1) + phosphate = RNA(n) + a ribonucleoside 5'-diphosphate. In terms of biological role, involved in mRNA degradation. Catalyzes the phosphorolysis of single-stranded polyribonucleotides processively in the 3'- to 5'-direction. The protein is Polyribonucleotide nucleotidyltransferase of Arthrobacter sp. (strain FB24).